The primary structure comprises 195 residues: MEVESKTSFGGMESKSKEVKVVTGGKLRPFDLVLRVVALALTLVAAVLLGVDKQTKVVSLQLLPTLPPMDVPVTAKWRYLSAFVYFVVSNAIACSYAALSLLLSVGNSKGNKGLGLAITVMDLVMVALLFSSNGAAGAIGLMGYEGNSRVRWGKVCNVFGKFCNQVAVALGLSFFGGLAFFLLVVMAAFALNKRH.

Over 1–29 the chain is Cytoplasmic; sequence MEVESKTSFGGMESKSKEVKVVTGGKLRP. Residues 30–50 traverse the membrane as a helical segment; it reads FDLVLRVVALALTLVAAVLLG. Over 51–82 the chain is Extracellular; sequence VDKQTKVVSLQLLPTLPPMDVPVTAKWRYLSA. A helical membrane pass occupies residues 83–103; it reads FVYFVVSNAIACSYAALSLLL. Over 104 to 122 the chain is Cytoplasmic; it reads SVGNSKGNKGLGLAITVMD. A helical transmembrane segment spans residues 123-143; sequence LVMVALLFSSNGAAGAIGLMG. The Extracellular portion of the chain corresponds to 144-165; the sequence is YEGNSRVRWGKVCNVFGKFCNQ. The chain crosses the membrane as a helical span at residues 166–186; the sequence is VAVALGLSFFGGLAFFLLVVM. Residues 187–195 are Cytoplasmic-facing; sequence AAFALNKRH.

It belongs to the Casparian strip membrane proteins (CASP) family. In terms of assembly, homodimer and heterodimers.

Its subcellular location is the cell membrane. The chain is CASP-like protein 1E2 from Vitis vinifera (Grape).